Reading from the N-terminus, the 1085-residue chain is Carbamoyl phosphate synthase large chain (1085 aa).

The segment at 1–399 (MPKRTDISNI…ALQKALCSLE (399 aa)) is carboxyphosphate synthetic domain. ATP is bound by residues R127, R167, G174, E206, L208, E213, G239, V240, H241, Q283, and E297. Positions 131 to 326 (KEAMLKIGMD…IAKVATMLAV (196 aa)) constitute an ATP-grasp 1 domain. Mg(2+)-binding residues include Q283, E297, and N299. Positions 283, 297, and 299 each coordinate Mn(2+). Residues 400–552 (NNWLGFESLS…APNPLPPIEN (153 aa)) form an oligomerization domain region. The segment at 553–951 (KQEKKEKKIL…AFFKAQTACF (399 aa)) is carbamoyl phosphate synthetic domain. Residues 678–871 (SLFLKELDIK…LAKVATRVMV (194 aa)) form the ATP-grasp 2 domain. ATP is bound by residues R714, K756, L758, E763, G788, I789, H790, S791, Q830, and E842. Q830, E842, and N844 together coordinate Mg(2+). The Mn(2+) site is built by Q830, E842, and N844. One can recognise an MGS-like domain in the interval 952–1085 (NPIKNKGLIF…ELLALQDYLK (134 aa)). Residues 952-1085 (NPIKNKGLIF…ELLALQDYLK (134 aa)) form an allosteric domain region.

This sequence belongs to the CarB family. As to quaternary structure, composed of two chains; the small (or glutamine) chain promotes the hydrolysis of glutamine to ammonia, which is used by the large (or ammonia) chain to synthesize carbamoyl phosphate. Tetramer of heterodimers (alpha,beta)4. The cofactor is Mg(2+). Requires Mn(2+) as cofactor.

It catalyses the reaction hydrogencarbonate + L-glutamine + 2 ATP + H2O = carbamoyl phosphate + L-glutamate + 2 ADP + phosphate + 2 H(+). The enzyme catalyses hydrogencarbonate + NH4(+) + 2 ATP = carbamoyl phosphate + 2 ADP + phosphate + 2 H(+). Its pathway is amino-acid biosynthesis; L-arginine biosynthesis; carbamoyl phosphate from bicarbonate: step 1/1. It functions in the pathway pyrimidine metabolism; UMP biosynthesis via de novo pathway; (S)-dihydroorotate from bicarbonate: step 1/3. Its function is as follows. Large subunit of the glutamine-dependent carbamoyl phosphate synthetase (CPSase). CPSase catalyzes the formation of carbamoyl phosphate from the ammonia moiety of glutamine, carbonate, and phosphate donated by ATP, constituting the first step of 2 biosynthetic pathways, one leading to arginine and/or urea and the other to pyrimidine nucleotides. The large subunit (synthetase) binds the substrates ammonia (free or transferred from glutamine from the small subunit), hydrogencarbonate and ATP and carries out an ATP-coupled ligase reaction, activating hydrogencarbonate by forming carboxy phosphate which reacts with ammonia to form carbamoyl phosphate. The polypeptide is Carbamoyl phosphate synthase large chain (Helicobacter pylori (strain ATCC 700392 / 26695) (Campylobacter pylori)).